A 179-amino-acid polypeptide reads, in one-letter code: Interleukin-10 (179 aa).

The N-terminal stretch at 1 to 19 is a signal peptide; it reads MPSSSALLCCLVFLAGVAA. Intrachain disulfides connect Cys31/Cys127 and Cys81/Cys133. N-linked (GlcNAc...) asparagine glycosylation is present at Asn135.

The protein belongs to the IL-10 family. As to quaternary structure, homodimer. Interacts with IL10RA and IL10RB.

Its subcellular location is the secreted. Major immune regulatory cytokine that acts on many cells of the immune system where it has profound anti-inflammatory functions, limiting excessive tissue disruption caused by inflammation. Mechanistically, IL10 binds to its heterotetrameric receptor comprising IL10RA and IL10RB leading to JAK1 and STAT2-mediated phosphorylation of STAT3. In turn, STAT3 translocates to the nucleus where it drives expression of anti-inflammatory mediators. Targets antigen-presenting cells (APCs) such as macrophages and monocytes and inhibits their release of pro-inflammatory cytokines including granulocyte-macrophage colony-stimulating factor /GM-CSF, granulocyte colony-stimulating factor/G-CSF, IL-1 alpha, IL-1 beta, IL-6, IL-8 and TNF-alpha. Also interferes with antigen presentation by reducing the expression of MHC-class II and co-stimulatory molecules, thereby inhibiting their ability to induce T cell activation. In addition, controls the inflammatory response of macrophages by reprogramming essential metabolic pathways including mTOR signaling. The chain is Interleukin-10 (IL10) from Cervus elaphus (Red deer).